The primary structure comprises 582 residues: Formate--tetrahydrofolate ligase (582 aa).

Residue 65–72 coordinates ATP; sequence TPLGEGKT.

The protein belongs to the formate--tetrahydrofolate ligase family.

The enzyme catalyses (6S)-5,6,7,8-tetrahydrofolate + formate + ATP = (6R)-10-formyltetrahydrofolate + ADP + phosphate. Its pathway is one-carbon metabolism; tetrahydrofolate interconversion. This Vibrio campbellii (strain ATCC BAA-1116) protein is Formate--tetrahydrofolate ligase.